A 178-amino-acid chain; its full sequence is Large ribosomal subunit protein uL6 (178 aa).

This sequence belongs to the universal ribosomal protein uL6 family. As to quaternary structure, part of the 50S ribosomal subunit.

Its function is as follows. This protein binds to the 23S rRNA, and is important in its secondary structure. It is located near the subunit interface in the base of the L7/L12 stalk, and near the tRNA binding site of the peptidyltransferase center. This is Large ribosomal subunit protein uL6 from Gluconobacter oxydans (strain 621H) (Gluconobacter suboxydans).